Reading from the N-terminus, the 227-residue chain is 7-cyano-7-deazaguanine synthase (227 aa).

ATP is bound at residue 7–17 (LSGGMDSLVTT). Cys-187, Cys-195, Cys-198, and Cys-201 together coordinate Zn(2+).

The protein belongs to the QueC family. Zn(2+) is required as a cofactor.

The catalysed reaction is 7-carboxy-7-deazaguanine + NH4(+) + ATP = 7-cyano-7-deazaguanine + ADP + phosphate + H2O + H(+). It functions in the pathway purine metabolism; 7-cyano-7-deazaguanine biosynthesis. Functionally, catalyzes the ATP-dependent conversion of 7-carboxy-7-deazaguanine (CDG) to 7-cyano-7-deazaguanine (preQ(0)). The polypeptide is 7-cyano-7-deazaguanine synthase (Chlorobium phaeovibrioides (strain DSM 265 / 1930) (Prosthecochloris vibrioformis (strain DSM 265))).